The following is a 359-amino-acid chain: GTP cyclohydrolase FolE2 (359 aa).

This sequence belongs to the GTP cyclohydrolase IV family.

It carries out the reaction GTP + H2O = 7,8-dihydroneopterin 3'-triphosphate + formate + H(+). It participates in cofactor biosynthesis; 7,8-dihydroneopterin triphosphate biosynthesis; 7,8-dihydroneopterin triphosphate from GTP: step 1/1. Its function is as follows. Converts GTP to 7,8-dihydroneopterin triphosphate. This chain is GTP cyclohydrolase FolE2, found in Cereibacter sphaeroides (strain KD131 / KCTC 12085) (Rhodobacter sphaeroides).